The following is a 148-amino-acid chain: Putative nickel-responsive regulator (148 aa).

Residues histidine 88, histidine 99, histidine 101, and cysteine 107 each coordinate Ni(2+).

Belongs to the transcriptional regulatory CopG/NikR family. Ni(2+) serves as cofactor.

Its function is as follows. Transcriptional regulator. This is Putative nickel-responsive regulator from Helicobacter acinonychis (strain Sheeba).